The sequence spans 212 residues: dITP/XTP pyrophosphatase (212 aa).

7-12 is a binding site for substrate; sequence SRNKKK. Asp-72 (proton acceptor) is an active-site residue. Asp-72 serves as a coordination point for Mg(2+). Substrate-binding positions include Ser-73, 163–166, Lys-187, and 192–193; these read FGYD and HR. The disordered stretch occupies residues 164-194; that stretch reads GYDPLFEPAEAPGQSSAELTPERKDELSHRG. The segment covering 183–192 has biased composition (basic and acidic residues); the sequence is TPERKDELSH.

This sequence belongs to the HAM1 NTPase family. In terms of assembly, homodimer. The cofactor is Mg(2+).

It catalyses the reaction XTP + H2O = XMP + diphosphate + H(+). It carries out the reaction dITP + H2O = dIMP + diphosphate + H(+). The catalysed reaction is ITP + H2O = IMP + diphosphate + H(+). In terms of biological role, pyrophosphatase that catalyzes the hydrolysis of nucleoside triphosphates to their monophosphate derivatives, with a high preference for the non-canonical purine nucleotides XTP (xanthosine triphosphate), dITP (deoxyinosine triphosphate) and ITP. Seems to function as a house-cleaning enzyme that removes non-canonical purine nucleotides from the nucleotide pool, thus preventing their incorporation into DNA/RNA and avoiding chromosomal lesions. This Corynebacterium urealyticum (strain ATCC 43042 / DSM 7109) protein is dITP/XTP pyrophosphatase.